A 258-amino-acid polypeptide reads, in one-letter code: Type III pantothenate kinase (258 aa).

ATP is bound at residue 9 to 16; it reads DIGNTSVN. 110 to 113 contacts substrate; sequence GADR. D112 functions as the Proton acceptor in the catalytic mechanism. D132 serves as a coordination point for K(+). An ATP-binding site is contributed by T135. T187 serves as a coordination point for substrate.

This sequence belongs to the type III pantothenate kinase family. Homodimer. It depends on NH4(+) as a cofactor. Requires K(+) as cofactor.

The protein localises to the cytoplasm. It carries out the reaction (R)-pantothenate + ATP = (R)-4'-phosphopantothenate + ADP + H(+). The protein operates within cofactor biosynthesis; coenzyme A biosynthesis; CoA from (R)-pantothenate: step 1/5. Catalyzes the phosphorylation of pantothenate (Pan), the first step in CoA biosynthesis. This chain is Type III pantothenate kinase, found in Dehalococcoides mccartyi (strain ATCC BAA-2266 / KCTC 15142 / 195) (Dehalococcoides ethenogenes (strain 195)).